The following is a 224-amino-acid chain: Putative adhesin A1C_06425 (224 aa).

A signal peptide spans M1–A22.

The polypeptide is Putative adhesin A1C_06425 (Rickettsia akari (strain Hartford)).